The following is a 227-amino-acid chain: Phage shock protein A homolog (227 aa).

Positions 33-125 (LRNMNSDLAK…AQMRKMHDKL (93 aa)) form a coiled coil. The segment at 191–211 (SAPQDDMADLSAKYDTGGSSQ) is disordered.

This sequence belongs to the PspA/Vipp/IM30 family.

The chain is Phage shock protein A homolog (ydjF) from Bacillus subtilis (strain 168).